A 453-amino-acid chain; its full sequence is Homogentisate 1,2-dioxygenase (453 aa).

Histidine 306 functions as the Proton acceptor in the catalytic mechanism. Fe cation-binding residues include histidine 349 and glutamate 355. 2 residues coordinate homogentisate: tyrosine 364 and histidine 385. A Fe cation-binding site is contributed by histidine 385.

It belongs to the homogentisate dioxygenase family. As to quaternary structure, hexamer; dimer of trimers. Requires Fe cation as cofactor.

The enzyme catalyses homogentisate + O2 = 4-maleylacetoacetate + H(+). It functions in the pathway amino-acid degradation; L-phenylalanine degradation; acetoacetate and fumarate from L-phenylalanine: step 4/6. Functionally, involved in the catabolism of homogentisate (2,5-dihydroxyphenylacetate or 2,5-OH-PhAc), a central intermediate in the degradation of phenylalanine and tyrosine. Catalyzes the oxidative ring cleavage of the aromatic ring of homogentisate to yield maleylacetoacetate. This chain is Homogentisate 1,2-dioxygenase, found in Rhizobium etli (strain CIAT 652).